The primary structure comprises 217 residues: FMN-dependent NADH:quinone oxidoreductase (217 aa).

FMN is bound by residues S10, S17 to S19, and S137 to G140.

Belongs to the azoreductase type 1 family. Homodimer. Requires FMN as cofactor.

The enzyme catalyses 2 a quinone + NADH + H(+) = 2 a 1,4-benzosemiquinone + NAD(+). It catalyses the reaction N,N-dimethyl-1,4-phenylenediamine + anthranilate + 2 NAD(+) = 2-(4-dimethylaminophenyl)diazenylbenzoate + 2 NADH + 2 H(+). Quinone reductase that provides resistance to thiol-specific stress caused by electrophilic quinones. Functionally, also exhibits azoreductase activity. Catalyzes the reductive cleavage of the azo bond in aromatic azo compounds to the corresponding amines. This Streptomyces avermitilis (strain ATCC 31267 / DSM 46492 / JCM 5070 / NBRC 14893 / NCIMB 12804 / NRRL 8165 / MA-4680) protein is FMN-dependent NADH:quinone oxidoreductase.